A 264-amino-acid polypeptide reads, in one-letter code: tRNA pseudouridine synthase A (264 aa).

Aspartate 51 (nucleophile) is an active-site residue. Residue tyrosine 109 participates in substrate binding.

The protein belongs to the tRNA pseudouridine synthase TruA family. Homodimer.

It carries out the reaction uridine(38/39/40) in tRNA = pseudouridine(38/39/40) in tRNA. In terms of biological role, formation of pseudouridine at positions 38, 39 and 40 in the anticodon stem and loop of transfer RNAs. This is tRNA pseudouridine synthase A from Vibrio atlanticus (strain LGP32) (Vibrio splendidus (strain Mel32)).